The primary structure comprises 454 residues: Probable tRNA methyltransferase 9B (454 aa).

Ser-214 is subject to Phosphoserine.

It belongs to the methyltransferase superfamily. As to expression, down-regulated in breast, bladder, colorectal, cervix and testicular carcinomas.

In terms of biological role, may modify wobble uridines in specific arginine and glutamic acid tRNAs. Acts as a tumor suppressor by promoting the expression of LIN9. The polypeptide is Probable tRNA methyltransferase 9B (Homo sapiens (Human)).